We begin with the raw amino-acid sequence, 358 residues long: Dynein axonemal assembly factor 10 (358 aa).

WD repeat units follow at residues 64–106 (EKPK…TPVY), 116–155 (NCID…TPVA), 163–206 (ETKR…VRWE), 208–250 (NIKN…PSKG), 258–298 (AHKS…QRSR), and 320–358 (LSTQ…LNKL).

In terms of assembly, interacts with PIH1D1; the interaction associates DNAAF10 with the R2TP complex. Interacts with several dynein axonemal assembly factors.

The protein localises to the dynein axonemal particle. Its function is as follows. Key assembly factor specifically required for the stability of axonemal dynein heavy chains in cytoplasm. The polypeptide is Dynein axonemal assembly factor 10 (dnaaf10) (Xenopus tropicalis (Western clawed frog)).